The chain runs to 2240 residues: Cadherin-89D (2240 aa).

5 consecutive Cadherin domains span residues serine 70–phenylalanine 179, leucine 180–phenylalanine 295, threonine 296–phenylalanine 411, glutamate 412–phenylalanine 528, and glutamate 529–glutamate 643. Residues asparagine 114, asparagine 119, asparagine 191, asparagine 278, asparagine 334, asparagine 417, asparagine 585, asparagine 720, asparagine 752, asparagine 822, asparagine 833, asparagine 983, asparagine 989, asparagine 1006, asparagine 1255, asparagine 1318, asparagine 1486, asparagine 1529, and asparagine 1556 are each glycosylated (N-linked (GlcNAc...) asparagine). Positions methionine 814–leucine 844 are disordered. Cadherin domains lie at threonine 824 to phenylalanine 927, asparagine 928 to phenylalanine 1087, threonine 1171 to phenylalanine 1284, lysine 1285 to phenylalanine 1389, and methionine 1411 to serine 1520. Residues phenylalanine 829–leucine 844 show a composition bias toward basic residues. Cadherin domains lie at glutamine 1534 to phenylalanine 1660 and arginine 1661 to glutamate 1774. A helical membrane pass occupies residues phenylalanine 1884–tyrosine 1904. Residues valine 1905–phenylalanine 2240 are Cytoplasmic-facing. Disordered stretches follow at residues isoleucine 1930 to valine 1972 and alanine 2121 to leucine 2140. Residues glutamine 1939 to arginine 1952 are compositionally biased toward basic residues. A compositionally biased stretch (polar residues) spans cysteine 1953–threonine 1964.

The protein resides in the cell membrane. Cadherins are calcium-dependent cell adhesion proteins. They preferentially interact with themselves in a homophilic manner in connecting cells. The chain is Cadherin-89D (Cad89D) from Drosophila melanogaster (Fruit fly).